A 412-amino-acid polypeptide reads, in one-letter code: Poly-beta-1,6-N-acetyl-D-glucosamine synthase (412 aa).

The next 4 helical transmembrane spans lie at Leu7–Ile28, Ile298–Ile320, Ile332–Ile354, and Val364–Met386.

It belongs to the glycosyltransferase 2 family.

Its subcellular location is the cell membrane. N-acetylglucosaminyltransferase that catalyzes the polymerization of single monomer units of UDP-N-acetylglucosamine to produce the linear homomer poly-beta-1,6-N-acetyl-D-glucosamine (PNAG, also referred to as PIA), a biofilm adhesin polysaccharide. Requires IcaD for full activity. This is Poly-beta-1,6-N-acetyl-D-glucosamine synthase (icaA) from Staphylococcus epidermidis (strain ATCC 35984 / DSM 28319 / BCRC 17069 / CCUG 31568 / BM 3577 / RP62A).